A 450-amino-acid polypeptide reads, in one-letter code: MGRKMRGAAAAAGLWLLALSSLLTLWGGLLPPRTELPASRPPEDRLPPHPIQSGGPAPEPRFPLPPPLVWDARGGSLKTFRALLTLAAGADNPPRRHQDDRGRHEPSGLSWPEERRAVHGGVFWSRGLEEQVPRGFSEAQAAAWLEVARGARVVALDRGGCGRSSNRLARFADGTRACVRYGINPEQIQGEALSYYLARLLGLQRHVPPLALARVEARGAQWVQVQEELRTAHWTEGSVVSLTRWLPNLTDVVVPEPWRSEDGRLRPLRDAGGELTNLSQAELVDLVQWTDLILFDYLTANFDRLVSNLFSLQWDPRVMHRATSNLHRGPGGALVFLDNEAGLVHGYRVAGMWDKYNEPLLQSVCVFRERTARRVLELHRGQDAAARLLRLYSRHEPRFPELAELSEPHAQLLQRRLDFLAKHILHCKAKYGRRPGDLITLRGREGLGYE.

An N-terminal signal peptide occupies residues 1–28; that stretch reads MGRKMRGAAAAAGLWLLALSSLLTLWGG. 2 disordered regions span residues 36 to 61 and 88 to 111; these read LPAS…PEPR and AGAD…GLSW. Residues 93 to 111 show a composition bias toward basic and acidic residues; the sequence is PPRRHQDDRGRHEPSGLSW. N-linked (GlcNAc...) asparagine glycans are attached at residues Asn248 and Asn277.

It belongs to the FJX1/FJ family. Glycosylated. Post-translationally, undergoes proteolytic cleavage. Expressed in brain, kidney and lung. In the telencephalon, expressed in the piriform cortex, hippocampus and olfactory bulb. In the diencephalon, expressed in the dorsal thalamus. Expressed in Purkinje cells of the cerebellum and in numerous medullary nuclei.

It is found in the secreted. Its function is as follows. Acts as an inhibitor of dendrite extension and branching. The chain is Four-jointed box protein 1 (Fjx1) from Mus musculus (Mouse).